A 216-amino-acid chain; its full sequence is MFLFDTLSKKTTMPTEETALPGREEALAVPETHFVNGRPLKGPYPDGLEIIYLGMGCFWGAERLFWKTPGVWVTAVGYAGGFTRNPTYHETTTGQTGHAEVVKVVYDPAVISLSGLLKIFFEEHDPTQGMRQGNDVGTTYRSAIYATTEGQLQQAQKARDAFQQALDEAGHGHAITTEIGPLETFYYAEDYHQQYLAKNPGGYCGLRGTGVSCNIG.

C57 is a catalytic residue.

It belongs to the MsrA Met sulfoxide reductase family.

The enzyme catalyses L-methionyl-[protein] + [thioredoxin]-disulfide + H2O = L-methionyl-(S)-S-oxide-[protein] + [thioredoxin]-dithiol. It catalyses the reaction [thioredoxin]-disulfide + L-methionine + H2O = L-methionine (S)-S-oxide + [thioredoxin]-dithiol. Functionally, has an important function as a repair enzyme for proteins that have been inactivated by oxidation. Catalyzes the reversible oxidation-reduction of methionine sulfoxide in proteins to methionine. The polypeptide is Peptide methionine sulfoxide reductase MsrA (Agrobacterium fabrum (strain C58 / ATCC 33970) (Agrobacterium tumefaciens (strain C58))).